A 61-amino-acid polypeptide reads, in one-letter code: Large ribosomal subunit protein uL30 (61 aa).

This sequence belongs to the universal ribosomal protein uL30 family. Part of the 50S ribosomal subunit.

In Corynebacterium efficiens (strain DSM 44549 / YS-314 / AJ 12310 / JCM 11189 / NBRC 100395), this protein is Large ribosomal subunit protein uL30.